The primary structure comprises 184 residues: NADH-quinone oxidoreductase subunit B (184 aa).

Residues Cys63, Cys64, Cys128, and Cys158 each coordinate [4Fe-4S] cluster.

This sequence belongs to the complex I 20 kDa subunit family. As to quaternary structure, NDH-1 is composed of 14 different subunits. Subunits NuoB, C, D, E, F, and G constitute the peripheral sector of the complex. It depends on [4Fe-4S] cluster as a cofactor.

The protein resides in the cell inner membrane. It carries out the reaction a quinone + NADH + 5 H(+)(in) = a quinol + NAD(+) + 4 H(+)(out). In terms of biological role, NDH-1 shuttles electrons from NADH, via FMN and iron-sulfur (Fe-S) centers, to quinones in the respiratory chain. The immediate electron acceptor for the enzyme in this species is believed to be ubiquinone. Couples the redox reaction to proton translocation (for every two electrons transferred, four hydrogen ions are translocated across the cytoplasmic membrane), and thus conserves the redox energy in a proton gradient. In Xylella fastidiosa (strain M12), this protein is NADH-quinone oxidoreductase subunit B.